The following is a 557-amino-acid chain: Dihydroxy-acid dehydratase (557 aa).

A Mg(2+)-binding site is contributed by D78. [2Fe-2S] cluster is bound at residue C119. Mg(2+)-binding residues include D120 and K121. K121 carries the N6-carboxylysine modification. Residue C191 participates in [2Fe-2S] cluster binding. E442 is a binding site for Mg(2+). S468 acts as the Proton acceptor in catalysis.

Belongs to the IlvD/Edd family. As to quaternary structure, homodimer. It depends on [2Fe-2S] cluster as a cofactor. Mg(2+) is required as a cofactor.

It carries out the reaction (2R)-2,3-dihydroxy-3-methylbutanoate = 3-methyl-2-oxobutanoate + H2O. It catalyses the reaction (2R,3R)-2,3-dihydroxy-3-methylpentanoate = (S)-3-methyl-2-oxopentanoate + H2O. It functions in the pathway amino-acid biosynthesis; L-isoleucine biosynthesis; L-isoleucine from 2-oxobutanoate: step 3/4. It participates in amino-acid biosynthesis; L-valine biosynthesis; L-valine from pyruvate: step 3/4. Functionally, functions in the biosynthesis of branched-chain amino acids. Catalyzes the dehydration of (2R,3R)-2,3-dihydroxy-3-methylpentanoate (2,3-dihydroxy-3-methylvalerate) into 2-oxo-3-methylpentanoate (2-oxo-3-methylvalerate) and of (2R)-2,3-dihydroxy-3-methylbutanoate (2,3-dihydroxyisovalerate) into 2-oxo-3-methylbutanoate (2-oxoisovalerate), the penultimate precursor to L-isoleucine and L-valine, respectively. This Lachnoclostridium phytofermentans (strain ATCC 700394 / DSM 18823 / ISDg) (Clostridium phytofermentans) protein is Dihydroxy-acid dehydratase.